Reading from the N-terminus, the 203-residue chain is dITP/XTP pyrophosphatase (203 aa).

A substrate-binding site is contributed by 7-12; that stretch reads SGNLHK. Residues Glu47 and Asp77 each coordinate Mg(2+). Residue Asp77 is the Proton acceptor of the active site. Substrate is bound by residues Ser78, 160 to 163, Lys183, and 188 to 189; these read FGYD and HR.

Belongs to the HAM1 NTPase family. As to quaternary structure, homodimer. It depends on Mg(2+) as a cofactor.

The enzyme catalyses XTP + H2O = XMP + diphosphate + H(+). It catalyses the reaction dITP + H2O = dIMP + diphosphate + H(+). It carries out the reaction ITP + H2O = IMP + diphosphate + H(+). Its function is as follows. Pyrophosphatase that catalyzes the hydrolysis of nucleoside triphosphates to their monophosphate derivatives, with a high preference for the non-canonical purine nucleotides XTP (xanthosine triphosphate), dITP (deoxyinosine triphosphate) and ITP. Seems to function as a house-cleaning enzyme that removes non-canonical purine nucleotides from the nucleotide pool, thus preventing their incorporation into DNA/RNA and avoiding chromosomal lesions. The polypeptide is dITP/XTP pyrophosphatase (Opitutus terrae (strain DSM 11246 / JCM 15787 / PB90-1)).